Consider the following 918-residue polypeptide: Isoleucine--tRNA ligase (918 aa).

Positions 57-67 match the 'HIGH' region motif; it reads PYANGHIHIGH. Position 564 (Glu-564) interacts with L-isoleucyl-5'-AMP. The 'KMSKS' region signature appears at 605-609; it reads KMSKS. Lys-608 provides a ligand contact to ATP. Zn(2+) is bound by residues Cys-888, Cys-891, Cys-903, and Cys-906.

The protein belongs to the class-I aminoacyl-tRNA synthetase family. IleS type 1 subfamily. In terms of assembly, monomer. It depends on Zn(2+) as a cofactor.

The protein localises to the cytoplasm. It carries out the reaction tRNA(Ile) + L-isoleucine + ATP = L-isoleucyl-tRNA(Ile) + AMP + diphosphate. Functionally, catalyzes the attachment of isoleucine to tRNA(Ile). As IleRS can inadvertently accommodate and process structurally similar amino acids such as valine, to avoid such errors it has two additional distinct tRNA(Ile)-dependent editing activities. One activity is designated as 'pretransfer' editing and involves the hydrolysis of activated Val-AMP. The other activity is designated 'posttransfer' editing and involves deacylation of mischarged Val-tRNA(Ile). The sequence is that of Isoleucine--tRNA ligase from Nitratiruptor sp. (strain SB155-2).